Consider the following 399-residue polypeptide: S-adenosylmethionine synthase (399 aa).

136-141 (GTGSAD) lines the ATP pocket.

It belongs to the AdoMet synthase 2 family. Mg(2+) is required as a cofactor.

The enzyme catalyses L-methionine + ATP + H2O = S-adenosyl-L-methionine + phosphate + diphosphate. Its pathway is amino-acid biosynthesis; S-adenosyl-L-methionine biosynthesis; S-adenosyl-L-methionine from L-methionine: step 1/1. Catalyzes the formation of S-adenosylmethionine from methionine and ATP. The protein is S-adenosylmethionine synthase of Methanothrix thermoacetophila (strain DSM 6194 / JCM 14653 / NBRC 101360 / PT) (Methanosaeta thermophila).